We begin with the raw amino-acid sequence, 464 residues long: Trigger factor (464 aa).

Residues 162 to 243 (GDFISIDLSA…VGTVKERELP (82 aa)) form the PPIase FKBP-type domain. The disordered stretch occupies residues 435–464 (ELFGNGEAETEEAASTDEAASDSTESEDQK).

This sequence belongs to the FKBP-type PPIase family. Tig subfamily.

It localises to the cytoplasm. The enzyme catalyses [protein]-peptidylproline (omega=180) = [protein]-peptidylproline (omega=0). In terms of biological role, involved in protein export. Acts as a chaperone by maintaining the newly synthesized protein in an open conformation. Functions as a peptidyl-prolyl cis-trans isomerase. This chain is Trigger factor, found in Rhodococcus jostii (strain RHA1).